Consider the following 368-residue polypeptide: Probable leucine aminopeptidase TRV_05750 (368 aa).

Positions 1-18 (MKVFAIAAVAALTAVAVA) are cleaved as a signal peptide. The N-linked (GlcNAc...) asparagine glycan is linked to Asn-92. Zn(2+) is bound by residues His-172 and Asp-191. Residues Asn-192 and Asn-216 are each glycosylated (N-linked (GlcNAc...) asparagine). Positions 230 and 257 each coordinate Zn(2+). Cys-301 and Cys-305 are disulfide-bonded. Residue His-334 coordinates Zn(2+).

Belongs to the peptidase M28 family. M28E subfamily. In terms of assembly, monomer. Zn(2+) serves as cofactor.

It localises to the secreted. In terms of biological role, probable extracellular aminopeptidase which contributes to pathogenicity. The sequence is that of Probable leucine aminopeptidase TRV_05750 from Trichophyton verrucosum (strain HKI 0517).